A 179-amino-acid polypeptide reads, in one-letter code: Replication restart protein DnaT (179 aa).

The disordered stretch occupies residues 156-179 (GGLPKRDVNTVSEPDSQIPPGFRG).

It belongs to the DnaT family. Homooligomerizes. Interacts with PriB. Component of the replication restart primosome. Primosome assembly occurs via a 'hand-off' mechanism. PriA binds to replication forks, subsequently PriB then DnaT bind; DnaT then displaces ssDNA to generate the helicase loading substrate.

Involved in the restart of stalled replication forks, which reloads the replicative helicase on sites other than the origin of replication. Can function in multiple replication restart pathways. Displaces ssDNA from a PriB-ssDNA complex. Probably forms a spiral filament on ssDNA. This is Replication restart protein DnaT from Escherichia coli O157:H7.